We begin with the raw amino-acid sequence, 630 residues long: Chaperone protein HtpG (630 aa).

The interval 1–343 (MAKHQFQTEA…SKDLPLNVSR (343 aa)) is a; substrate-binding. The tract at residues 344 to 554 (EILQSNAVMA…KEDPAFMMAQ (211 aa)) is b. Residues 555–630 (IMKQMGQSGD…RLNRVIAKAI (76 aa)) are c.

It belongs to the heat shock protein 90 family. Homodimer.

The protein localises to the cytoplasm. Molecular chaperone. Has ATPase activity. The protein is Chaperone protein HtpG of Sulfurimonas denitrificans (strain ATCC 33889 / DSM 1251) (Thiomicrospira denitrificans (strain ATCC 33889 / DSM 1251)).